Here is a 333-residue protein sequence, read N- to C-terminus: F420-dependent glucose-6-phosphate dehydrogenase (333 aa).

Position 37 (Asp37) interacts with coenzyme F420-(gamma-Glu)n. His38 functions as the Proton donor in the catalytic mechanism. Coenzyme F420-(gamma-Glu)n contacts are provided by residues Thr74 and 105 to 106 (SG). Catalysis depends on Glu107, which acts as the Proton acceptor. Residues Asn110, 174–175 (GG), and 177–178 (VV) contribute to the coenzyme F420-(gamma-Glu)n site. Substrate-binding residues include Thr192, Lys195, Lys256, and Arg280.

It belongs to the F420-dependent glucose-6-phosphate dehydrogenase family. In terms of assembly, homodimer.

The catalysed reaction is oxidized coenzyme F420-(gamma-L-Glu)(n) + D-glucose 6-phosphate + H(+) = 6-phospho-D-glucono-1,5-lactone + reduced coenzyme F420-(gamma-L-Glu)(n). Catalyzes the coenzyme F420-dependent oxidation of glucose 6-phosphate (G6P) to 6-phosphogluconolactone. The chain is F420-dependent glucose-6-phosphate dehydrogenase from Amycolatopsis mediterranei (strain U-32).